Here is a 308-residue protein sequence, read N- to C-terminus: Glucan 1,3-beta-glucosidase BGL2 (308 aa).

An N-terminal signal peptide occupies residues 1 to 18; sequence MQIKFLTTLATVLTSVAA. The Proton donor role is filled by glutamate 119. Asparagine 197 carries an N-linked (GlcNAc...) asparagine glycan. Catalysis depends on glutamate 228, which acts as the Nucleophile.

This sequence belongs to the glycosyl hydrolase 17 family.

It localises to the secreted. It is found in the cell wall. Its subcellular location is the cytoplasm. The catalysed reaction is Successive hydrolysis of beta-D-glucose units from the non-reducing ends of (1-&gt;3)-beta-D-glucans, releasing alpha-glucose.. In terms of biological role, cell wall glucan 1,3-beta-glucosidase involved in cell wall biosynthesis and virulence. Crucial for delivery of beta-1,3-glucan to the biofilm matrix and for accumulation of mature matrix biomass. Plays a role as a major antigen in human systemic candidiasis patients. The protein is Glucan 1,3-beta-glucosidase BGL2 (BGL2) of Candida albicans (strain SC5314 / ATCC MYA-2876) (Yeast).